We begin with the raw amino-acid sequence, 186 residues long: ATP synthase subunit delta (186 aa).

It belongs to the ATPase delta chain family. F-type ATPases have 2 components, F(1) - the catalytic core - and F(0) - the membrane proton channel. F(1) has five subunits: alpha(3), beta(3), gamma(1), delta(1), epsilon(1). F(0) has three main subunits: a(1), b(2) and c(10-14). The alpha and beta chains form an alternating ring which encloses part of the gamma chain. F(1) is attached to F(0) by a central stalk formed by the gamma and epsilon chains, while a peripheral stalk is formed by the delta and b chains.

The protein localises to the cell membrane. F(1)F(0) ATP synthase produces ATP from ADP in the presence of a proton or sodium gradient. F-type ATPases consist of two structural domains, F(1) containing the extramembraneous catalytic core and F(0) containing the membrane proton channel, linked together by a central stalk and a peripheral stalk. During catalysis, ATP synthesis in the catalytic domain of F(1) is coupled via a rotary mechanism of the central stalk subunits to proton translocation. Functionally, this protein is part of the stalk that links CF(0) to CF(1). It either transmits conformational changes from CF(0) to CF(1) or is implicated in proton conduction. The sequence is that of ATP synthase subunit delta from Symbiobacterium thermophilum (strain DSM 24528 / JCM 14929 / IAM 14863 / T).